We begin with the raw amino-acid sequence, 486 residues long: Patatin-like phospholipase domain-containing protein 2 (486 aa).

At 1 to 8 the chain is on the cytoplasmic side; it reads MFPKETTW. The chain crosses the membrane as a helical span at residues 9–29; sequence NISFAGCGFLGVYHIGVASCL. The PNPLA domain occupies 10–179; sequence ISFAGCGFLG…SDNLPLYELK (170 aa). Positions 14 to 19 match the GXGXXG motif; sequence GCGFLG. At 30-42 the chain is on the extracellular side; the sequence is REHAPFLVANATH. N-linked (GlcNAc...) asparagine glycosylation occurs at N39. A helical transmembrane segment spans residues 43 to 63; sequence IYGASAGALTATALVTGACLG. The GXSXG signature appears at 45–49; it reads GASAG. S47 acts as the Nucleophile in catalysis. The Cytoplasmic segment spans residues 64–137; the sequence is EAGANIIEVS…IITHFNSKEE (74 aa). A Glycyl lysine isopeptide (Lys-Gly) (interchain with G-Cter in ubiquitin) cross-link involves residue K92. The chain crosses the membrane as a helical span at residues 138–158; that stretch reads LIQANVCSTFIPVYCGLIPPS. Residues 159–334 lie on the Extracellular side of the membrane; it reads LQGVRYVDGG…TTLSNMLPVR (176 aa). The active-site Proton acceptor is D166. The DGA/G signature appears at 166 to 168; it reads DGG. Residues 335 to 355 traverse the membrane as a helical segment; it reads LAMAMMVPYTLPLESAVSFTI. At 356–486 the chain is on the cytoplasmic side; sequence RLLEWLPDVP…PQHPPSSPPC (131 aa). S377 bears the Phosphoserine; in vitro mark. 2 positions are modified to phosphoserine; by PKA: S399 and S409. A Phosphoserine; in vitro modification is found at S433.

In terms of assembly, interacts with ABHD5; this association stimulates PNPLA2 triglyceride hydrolase activity. Interacts with SERPINF1; this interaction stimulates the phospholipase A2 activity of PNPLA2. Despite a colocalization in lipid droplets, it probably does not interact with PLIN. Interacts with PLIN5; prevents interaction with ABHD5. Interacts with FAF2. Post-translationally, phosphorylation at Ser-409 by PKA is increased during fasting and moderate intensity exercise, and moderately increases lipolytic activity. In terms of processing, ubiquitinated by PEX2 in response to reactive oxygen species (ROS), leading to its degradation. Ubiquitination is stimulated by LDAH.

It is found in the lipid droplet. The protein localises to the cell membrane. The protein resides in the cytoplasm. It catalyses the reaction a triacylglycerol + H2O = a diacylglycerol + a fatty acid + H(+). The enzyme catalyses a triacylglycerol + H2O = a 1,2-diacylglycerol + a fatty acid + H(+). The catalysed reaction is a triacylglycerol + H2O = a 1,3-diacylglycerol + a fatty acid + H(+). It carries out the reaction a triacyl-sn-glycerol + H2O = a 1,3-diacyl-sn-glycerol + a fatty acid + H(+). It catalyses the reaction a triacyl-sn-glycerol + H2O = a 2,3-diacyl-sn-glycerol + a fatty acid + H(+). The enzyme catalyses a 1-acylglycerol + a 1,3-diacylglycerol = a triacylglycerol + glycerol. The catalysed reaction is a 1-acylglycerol + a 1,2-diacylglycerol = a triacylglycerol + glycerol. It carries out the reaction 2 a 1-acylglycerol = a 1,2-diacylglycerol + glycerol. It catalyses the reaction a triacylglycerol + all-trans-retinol = an all-trans-retinyl ester + a diacylglycerol. The enzyme catalyses 1,2-di-(9Z-octadecenoyl)-glycerol + (9Z)-octadecenoate + H(+) = 1,2,3-tri-(9Z-octadecenoyl)-glycerol + H2O. The catalysed reaction is 1,2,3-tri-(9Z-octadecenoyl)-glycerol + H2O = 1,3-di-(9Z-octadecenoyl)-glycerol + (9Z)-octadecenoate + H(+). It carries out the reaction 1-(9Z-octadecenoyl)-glycerol + 1,3-di-(9Z-octadecenoyl)-glycerol = 1,2,3-tri-(9Z-octadecenoyl)-glycerol + glycerol. It catalyses the reaction 1-(9Z-octadecenoyl)-glycerol + 1,2-di-(9Z-octadecenoyl)-glycerol = 1,2,3-tri-(9Z-octadecenoyl)-glycerol + glycerol. The enzyme catalyses 2 1-(9Z-octadecenoyl)-glycerol = 1,2-di-(9Z-octadecenoyl)-glycerol + glycerol. The catalysed reaction is 1,2,3-tri-(9Z-octadecenoyl)-glycerol + all-trans-retinol = all-trans-retinyl 9Z-octadecenoate + di-(9Z)-octadecenoylglycerol. It carries out the reaction 1,2,3-tri-(9Z)-hexadecenoylglycerol + H2O = 1,3-di-(9Z)-hexadecenoylglycerol + (9Z)-hexadecenoate + H(+). It catalyses the reaction 1,2,3-tri-(9Z,12Z)-octadecadienoylglycerol + H2O = 1,3-di-(9Z,12Z)-octadecadienoylglycerol + (9Z,12Z)-octadecadienoate + H(+). The enzyme catalyses 1,2,3-tri-(9Z,12Z,15Z)-octadecatrienoylglycerol + H2O = 1,3-di-(9Z,12Z,15Z)-octadecatrienoylglycerol + (9Z,12Z,15Z)-octadecatrienoate + H(+). The catalysed reaction is 1,3-di-(9Z)-octadecenoyl-2-hexadecanoylglycerol + H2O = 1,3-di-(9Z-octadecenoyl)-glycerol + hexadecanoate + H(+). It carries out the reaction 1,2-di-(9Z)-octadecenoyl-3-hexadecanoyl-sn-glycerol + H2O = 1-(9Z)-octadecenoyl-3-hexadecanoyl-sn-glycerol + (9Z)-octadecenoate + H(+). It catalyses the reaction 1-hexadecanoyl-2,3-di-(9Z)-octadecenoyl-sn-glycerol + H2O = 1-hexadecanoyl-3-(9Z)-octadecenoyl-sn-glycerol + (9Z)-octadecenoate + H(+). The enzyme catalyses 1,2,3-tri-(9Z-octadecenoyl)-glycerol + H2O = 2,3-di-(9Z)-octadecenoyl-sn-glycerol + (9Z)-octadecenoate + H(+). The catalysed reaction is 1,2,3-tri-(9Z)-hexadecenoylglycerol + H2O = 2,3-di-(9Z)-hexadecenoyl-sn-glycerol + (9Z)-hexadecenoate + H(+). It carries out the reaction 1,2,3-tri-(9Z,12Z)-octadecadienoylglycerol + H2O = 2,3-di-(9Z,12Z)-octadecadienoyl-sn-glycerol + (9Z,12Z)-octadecadienoate + H(+). It catalyses the reaction 1,2,3-tri-(9Z,12Z,15Z)-octadecatrienoylglycerol + H2O = 2,3-di-(9Z,12Z,15Z)-octadecatrienoyl-sn-glycerol + (9Z,12Z,15Z)-octadecatrienoate + H(+). The enzyme catalyses 1,3-di-(9Z)-octadecenoyl-2-hexadecanoylglycerol + H2O = 2-hexadecanoyl-3-(9Z)-octadecenoyl-sn-glycerol + (9Z)-octadecenoate + H(+). The catalysed reaction is 1-hexadecanoyl-2,3-di-(9Z)-octadecenoyl-sn-glycerol + H2O = 2,3-di-(9Z)-octadecenoyl-sn-glycerol + hexadecanoate + H(+). It carries out the reaction 1,2-di-(9Z)-octadecenoyl-3-hexadecanoyl-sn-glycerol + H2O = 2-(9Z-octadecenoyl)-3-hexadecanoyl-sn-glycerol + (9Z)-octadecenoate + H(+). It catalyses the reaction a 1,2-diacyl-sn-glycero-3-phosphocholine + H2O = a 1-acyl-sn-glycero-3-phosphocholine + a fatty acid + H(+). The enzyme catalyses 1,2,3-tri-(9Z-octadecenoyl)-glycerol + 9-hydroxy-octadecanoate = 9-(9Z-octadecenoyloxy)-octadecanoate + 2,3-di-(9Z)-octadecenoyl-sn-glycerol. The catalysed reaction is 1-hexadecanoyl-2,3-di-(9Z)-octadecenoyl-sn-glycerol + 9-hydroxy-octadecanoate = 9-hexadecanoyloxy-octadecanoate + 2,3-di-(9Z)-octadecenoyl-sn-glycerol. It carries out the reaction 1,2,3-tri-(10Z)-heptadecenoylglycerol + 9-hydroxy-octadecanoate = 2,3-di-(10Z-heptadecenoyl)-sn-glycerol + 9-(10Z-heptadecenoyloxy)-octadecanoate. It catalyses the reaction 1,2,3-tri-(9Z,12Z)-octadecadienoylglycerol + 9-hydroxy-octadecanoate = 2,3-di-(9Z,12Z)-octadecadienoyl-sn-glycerol + 9-(9Z,12Z-octadecadienoyloxy)-octadecanoate. The enzyme catalyses 1,2,3-tri-(9Z)-hexadecenoylglycerol + 9-hydroxy-octadecanoate = 2,3-di-(9Z)-hexadecenoyl-sn-glycerol + 9-(9Z-hexadecenoyloxy)-octadecanoate. The catalysed reaction is 9-hydroxy-octadecanoate + 1,2-di-(9Z-octadecenoyl)-sn-glycerol = 9-(9Z-octadecenoyloxy)-octadecanoate + 2-(9Z-octadecenoyl)-glycerol. It carries out the reaction 1-hexadecanoyl-2,3-di-(9Z)-octadecenoyl-sn-glycerol + 9-hydroxy-octadecanoate = 1-hexadecanoyl-3-(9Z)-octadecenoyl-sn-glycerol + 9-(9Z-octadecenoyloxy)-octadecanoate. Its pathway is glycerolipid metabolism; triacylglycerol degradation. In terms of biological role, catalyzes the initial step in triglyceride hydrolysis in adipocyte and non-adipocyte lipid droplets. Exhibits a strong preference for the hydrolysis of long-chain fatty acid esters at the sn-2 position of the glycerol backbone and acts coordinately with LIPE/HLS and DGAT2 within the lipolytic cascade. Also possesses acylglycerol transacylase and phospholipase A2 activities. Transfers fatty acid from triglyceride to retinol, hydrolyzes retinylesters, and generates 1,3-diacylglycerol from triglycerides. Regulates adiposome size and may be involved in the degradation of adiposomes. Catalyzes the formation of an ester bond between hydroxy fatty acids and fatty acids derived from triglycerides or diglycerides to generate fatty acid esters of hydroxy fatty acids (FAHFAs) in adipocytes. Acts antagonistically with LDAH in regulation of cellular lipid stores. Inhibits LDAH-stimulated lipid droplet fusion. May play an important role in energy homeostasis. May play a role in the response of the organism to starvation, enhancing hydrolysis of triglycerides and providing free fatty acids to other tissues to be oxidized in situations of energy depletion. The chain is Patatin-like phospholipase domain-containing protein 2 (PNPLA2) from Bos taurus (Bovine).